Consider the following 489-residue polypeptide: NAC domain-containing protein 74 (489 aa).

In terms of domain architecture, NAC spans 9–159 (LPPGFGFHPK…AYVLCRITKR (151 aa)). Residues 108–165 (IGTKKTLVFHEGRPPTGRRTEWIMHEYYIDERECQACPDMKDAYVLCRITKRNDWIPG) mediate DNA binding. The segment covering 413–427 (KNQAHDVASTKRSDA) has biased composition (basic and acidic residues). The segment at 413 to 435 (KNQAHDVASTKRSDAGKPSTELS) is disordered. The chain crosses the membrane as a helical span at residues 456–476 (WNMILVAGFAIGVAVVALHIG).

As to expression, widely expressed.

The protein localises to the nucleus. It is found in the cell membrane. In terms of biological role, transcription activator involved in heat and endoplasmic reticulum (ER) stress responses. Regulates the expression of genes involved in ER protein folding and heat stress-responsive genes. Binds directly to the promoter of BZIP74 and regulates its expression in response to heat stress. This is NAC domain-containing protein 74 from Oryza sativa subsp. japonica (Rice).